We begin with the raw amino-acid sequence, 131 residues long: D-ribose pyranase (131 aa).

Histidine 20 (proton donor) is an active-site residue. Substrate is bound by residues aspartate 28, histidine 98, and 120–122 (FSN).

It belongs to the RbsD / FucU family. RbsD subfamily. Homodecamer.

The protein resides in the cytoplasm. The enzyme catalyses beta-D-ribopyranose = beta-D-ribofuranose. The protein operates within carbohydrate metabolism; D-ribose degradation; D-ribose 5-phosphate from beta-D-ribopyranose: step 1/2. Functionally, catalyzes the interconversion of beta-pyran and beta-furan forms of D-ribose. The sequence is that of D-ribose pyranase from Levilactobacillus brevis (strain ATCC 367 / BCRC 12310 / CIP 105137 / JCM 1170 / LMG 11437 / NCIMB 947 / NCTC 947) (Lactobacillus brevis).